Reading from the N-terminus, the 115-residue chain is MLRLGASVGVHQGSRILFSDFADGGQMWTGNGPREYRLDVTFPEPFTRTPAVTVGLSMWDMDHKTNSRMDIGAENITPQGFQIVFKTWGDTRIARVRADWLAIGSVRDDEDWEIE.

This is ATP synthase subunits region ORF 7 from Fuscovulum blasticum (Rhodobacter blasticus).